A 350-amino-acid polypeptide reads, in one-letter code: MNTLMKIQLVRPVFRITLRNYGKPERFMWCQKEYARAPKVVCLDGNEIPVIGLGTFNSPKGQVTEAVKVAIDAGYRHIDCAYVYQNEDEVGDGVEAKIKEGVVKREDLFITSKLWNTFHRPDLVKSALENTLSSLKLKYLDLYLIHWPMGYKEGCDLFPTDKDGKTLYSPVDYVDTWKAMEKLVEEGLVKSIGVSNFNRRQIERVLEVATIPPVTNQIECHPYLTQKKLIDFCKSKDITITAYSPLGSPNRPWAKAGDPVILEEAKIKEIAAKKKKTPGQILIRYQVQRANIVIPKSVTKDRIESNFQVFDFELTPEEIEIIESFECNGRLVPLLNQYGHPHHPFEKDEY.

Residue Tyr-84 is the Proton donor of the active site. His-146 serves as a coordination point for substrate. NADP(+) is bound at residue 244–306 (SPLGSPNRPW…SVTKDRIESN (63 aa)).

Belongs to the aldo/keto reductase family.

Its subcellular location is the cytoplasm. It carries out the reaction an alditol + NADP(+) = an aldose + NADPH + H(+). The enzyme catalyses all-trans-retinol + NADP(+) = all-trans-retinal + NADPH + H(+). It catalyses the reaction 9-cis-retinol + NADP(+) = 9-cis-retinal + NADPH + H(+). The catalysed reaction is 13-cis-retinol + NADP(+) = 13-cis-retinal + NADPH + H(+). It carries out the reaction glycerol + NADP(+) = D-glyceraldehyde + NADPH + H(+). The enzyme catalyses glycerol + NADP(+) = L-glyceraldehyde + NADPH + H(+). It catalyses the reaction prenol + NADP(+) = 3-methyl-2-butenal + NADPH + H(+). The catalysed reaction is (E)-hex-2-en-1-ol + NADP(+) = (E)-hex-2-enal + NADPH + H(+). It carries out the reaction (E,E)-2,4-hexadien-1-ol + NADP(+) = (E,E)-2,4-hexadienal + NADPH + H(+). The enzyme catalyses a 4-hydroxynonen-1-ol + NADP(+) = a 4-hydroxynonenal + NADPH + H(+). It catalyses the reaction prostaglandin F2alpha + NADP(+) = prostaglandin H2 + NADPH + H(+). The catalysed reaction is allyl alcohol + NADP(+) = acrolein + NADPH + H(+). It carries out the reaction pyridine 3-methanol + NADP(+) = pyridine-3-carbaldehyde + NADPH + H(+). The enzyme catalyses 1-hexadecanoyl-2-(5-oxopentanoyl)-sn-glycero-3-phosphocholine + NADPH + H(+) = 1-hexadecanoyl-2-(5-hydroxypentanoyl)-sn-glycero-3-phosphocholine + NADP(+). It catalyses the reaction 1-hexadecanoyl-2-(7-oxoheptanoyl)-sn-glycero-3-phosphocholine + NADPH + H(+) = 1-hexadecanoyl-2-(7-hydroxyheptanoyl)-sn-glycero-3-phosphocholine + NADP(+). The catalysed reaction is 1-hexadecanoyl-2-(9-oxononanoyl)-sn-glycero-3-phosphocholine + NADPH + H(+) = 1-hexadecanoyl-2-(9-hydroxynonanoyl)-sn-glycero-3-phosphocholine + NADP(+). It carries out the reaction 1-hexadecanoyl-2-(5-oxopentanoyl)-sn-glycero-3-phosphoethanolamine + NADPH + H(+) = 1-hexadecanoyl-2-(5-hydroxypentanoyl)-sn-glycero-3-phosphoethanolamine + NADP(+). Its function is as follows. Catalyzes the NADPH-dependent reduction of a wide variety of carbonyl-containing compounds to their corresponding alcohols. Displays enzymatic activity towards endogenous metabolites such as aromatic and aliphatic aldehydes, ketones, monosaccharides, bile acids and xenobiotics substrates. Key enzyme in the polyol pathway, catalyzes reduction of glucose to sorbitol during hyperglycemia. Reduces steroids and their derivatives and prostaglandins. Through production of prostaglandin F2alpha may regulate the activity of non-muscle myosin II in an autocrine or paracrine fashion; influences border cell and nurse cell stiffness to facilitate border cell cluster migration. Also regulates the cell surface localization of integrins in an autocrine or paracrine fashion; influences border cell adhesion to maintain border cell cluster morphology. In hemocytes, probably contributes to production of sugar alcohols in the hemolymph, which act as alarmins involved in gut-fat body innate immunological communication (GFIC); leads to activation of the imd/Relish signaling pathway in the fat body. This is Aldo-keto reductase 1B from Drosophila melanogaster (Fruit fly).